Reading from the N-terminus, the 161-residue chain is 2-C-methyl-D-erythritol 2,4-cyclodiphosphate synthase (161 aa).

2 residues coordinate a divalent metal cation: aspartate 9 and histidine 11. 4-CDP-2-C-methyl-D-erythritol 2-phosphate-binding positions include aspartate 9–histidine 11 and histidine 37–serine 38. Histidine 45 lines the a divalent metal cation pocket. 4-CDP-2-C-methyl-D-erythritol 2-phosphate contacts are provided by residues aspartate 59–glycine 61, phenylalanine 64–aspartate 68, threonine 135–glutamate 138, and arginine 145.

This sequence belongs to the IspF family. In terms of assembly, homotrimer. Requires a divalent metal cation as cofactor.

The catalysed reaction is 4-CDP-2-C-methyl-D-erythritol 2-phosphate = 2-C-methyl-D-erythritol 2,4-cyclic diphosphate + CMP. It participates in isoprenoid biosynthesis; isopentenyl diphosphate biosynthesis via DXP pathway; isopentenyl diphosphate from 1-deoxy-D-xylulose 5-phosphate: step 4/6. Functionally, involved in the biosynthesis of isopentenyl diphosphate (IPP) and dimethylallyl diphosphate (DMAPP), two major building blocks of isoprenoid compounds. Catalyzes the conversion of 4-diphosphocytidyl-2-C-methyl-D-erythritol 2-phosphate (CDP-ME2P) to 2-C-methyl-D-erythritol 2,4-cyclodiphosphate (ME-CPP) with a corresponding release of cytidine 5-monophosphate (CMP). The protein is 2-C-methyl-D-erythritol 2,4-cyclodiphosphate synthase of Leptospira interrogans serogroup Icterohaemorrhagiae serovar copenhageni (strain Fiocruz L1-130).